Reading from the N-terminus, the 68-residue chain is MPKLKTKSAVKKRFKLTASGKVIASQAGKKHFMRRRTKAQIRNLRGTTILCPQDRYNIKKYFLPYGIN.

The protein belongs to the bacterial ribosomal protein bL35 family.

The sequence is that of Large ribosomal subunit protein bL35 from Rickettsia conorii (strain ATCC VR-613 / Malish 7).